The following is a 396-amino-acid chain: uncharacterized protein (396 aa).

[4Fe-4S] cluster is bound by residues cysteine 8, cysteine 14, cysteine 17, and cysteine 95. Positions 229, 258, 279, and 325 each coordinate S-adenosyl-L-methionine. The active-site Nucleophile is cysteine 352.

This sequence belongs to the class I-like SAM-binding methyltransferase superfamily. RNA M5U methyltransferase family.

This is an uncharacterized protein from Chlamydia trachomatis serovar D (strain ATCC VR-885 / DSM 19411 / UW-3/Cx).